Here is a 555-residue protein sequence, read N- to C-terminus: Chaperonin GroEL 2 (555 aa).

Residues Thr-29–Pro-32, Asp-86–Thr-90, Gly-414, Asn-480–Leu-482, and Asp-496 each bind ATP.

Belongs to the chaperonin (HSP60) family. As to quaternary structure, forms a cylinder of 14 subunits composed of two heptameric rings stacked back-to-back. Interacts with the co-chaperonin GroES.

It localises to the cytoplasm. It catalyses the reaction ATP + H2O + a folded polypeptide = ADP + phosphate + an unfolded polypeptide.. In terms of biological role, together with its co-chaperonin GroES, plays an essential role in assisting protein folding. The GroEL-GroES system forms a nano-cage that allows encapsulation of the non-native substrate proteins and provides a physical environment optimized to promote and accelerate protein folding. The chain is Chaperonin GroEL 2 from Synechococcus sp. (strain ATCC 27144 / PCC 6301 / SAUG 1402/1) (Anacystis nidulans).